The following is a 434-amino-acid chain: GTPase Obg (434 aa).

One can recognise an Obg domain in the interval 1-158 (MFLDTAKIKV…RELQLELKIL (158 aa)). One can recognise an OBG-type G domain in the interval 159 to 336 (ADVGLVGFPS…LLDATAELLD (178 aa)). GTP is bound by residues 165–172 (GFPSVGKS), 190–194 (FTTIV), 212–215 (DLPG), 282–285 (NKMD), and 317–319 (SGL). Mg(2+) contacts are provided by serine 172 and threonine 192. Residues 356–434 (GFDEEEKAFE…IGKFEFEFVD (79 aa)) form the OCT domain.

It belongs to the TRAFAC class OBG-HflX-like GTPase superfamily. OBG GTPase family. Monomer. The cofactor is Mg(2+).

It is found in the cytoplasm. In terms of biological role, an essential GTPase which binds GTP, GDP and possibly (p)ppGpp with moderate affinity, with high nucleotide exchange rates and a fairly low GTP hydrolysis rate. Plays a role in control of the cell cycle, stress response, ribosome biogenesis and in those bacteria that undergo differentiation, in morphogenesis control. The polypeptide is GTPase Obg (Streptococcus pneumoniae (strain Hungary19A-6)).